The following is a 104-amino-acid chain: Putative Fis-like DNA-binding protein (104 aa).

The segment at residues 80-99 (QTKASELLGLNRGTLRKKLK) is a DNA-binding region (H-T-H motif).

It belongs to the transcriptional regulatory Fis family.

The sequence is that of Putative Fis-like DNA-binding protein from Pseudomonas aeruginosa (strain ATCC 15692 / DSM 22644 / CIP 104116 / JCM 14847 / LMG 12228 / 1C / PRS 101 / PAO1).